The following is a 469-amino-acid chain: Ribulose bisphosphate carboxylase large chain (469 aa).

Lys-5 carries the N6,N6,N6-trimethyllysine modification. Positions 114 and 164 each coordinate substrate. Lys-166 serves as the catalytic Proton acceptor. A substrate-binding site is contributed by Lys-168. Residues Lys-192, Asp-194, and Glu-195 each coordinate Mg(2+). Residue Lys-192 is modified to N6-carboxylysine. His-285 acts as the Proton acceptor in catalysis. Positions 286, 318, and 370 each coordinate substrate.

It belongs to the RuBisCO large chain family. Type I subfamily. As to quaternary structure, heterohexadecamer of 8 large chains and 8 small chains; disulfide-linked. The disulfide link is formed within the large subunit homodimers. Mg(2+) is required as a cofactor. The disulfide bond which can form in the large chain dimeric partners within the hexadecamer appears to be associated with oxidative stress and protein turnover.

Its subcellular location is the plastid. The protein resides in the chloroplast. It catalyses the reaction 2 (2R)-3-phosphoglycerate + 2 H(+) = D-ribulose 1,5-bisphosphate + CO2 + H2O. The enzyme catalyses D-ribulose 1,5-bisphosphate + O2 = 2-phosphoglycolate + (2R)-3-phosphoglycerate + 2 H(+). In terms of biological role, ruBisCO catalyzes two reactions: the carboxylation of D-ribulose 1,5-bisphosphate, the primary event in carbon dioxide fixation, as well as the oxidative fragmentation of the pentose substrate in the photorespiration process. Both reactions occur simultaneously and in competition at the same active site. In Calycophyllum candidissimum (Degame lemonwood tree), this protein is Ribulose bisphosphate carboxylase large chain.